Consider the following 585-residue polypeptide: Rab GTPase-binding effector protein 2 (585 aa).

The residue at position 2 (A2) is an N-acetylalanine. Residues 27–183 adopt a coiled-coil conformation; the sequence is QEGAKVEAES…ELIQEIQRRP (157 aa). Disordered regions lie at residues 178-265, 381-408, and 491-515; these read EIQR…ASLV, ENQG…EESL, and EEQS…EEAQ. Phosphoserine occurs at positions 188, 192, 198, and 202. Positions 288 to 540 form a coiled coil; it reads NQWEQLQLEG…QAELETSEQV (253 aa). Positions 491–501 are enriched in basic and acidic residues; the sequence is EEQSKAKRQEV.

This sequence belongs to the rabaptin family. As to quaternary structure, heterodimer with RABGEF1. The dimer binds RAB5A that has been activated by GTP-binding. Interacts with SDCCAG8; this interaction is important for ciliogenesis regulation. Interacts with RAB4; this interaction may mediate VEGFR2 cell surface expression.

The protein localises to the cytoplasm. Its subcellular location is the early endosome. It localises to the cytoskeleton. The protein resides in the microtubule organizing center. It is found in the centrosome. The protein localises to the cilium basal body. Plays a role in membrane trafficking and in homotypic early endosome fusion. Participates in arteriogenesis by regulating vascular endothelial growth factor receptor 2/VEGFR2 cell surface expression and endosomal trafficking. By interacting with SDCCAG8, localizes to centrosomes and plays a critical role in ciliogenesis. The chain is Rab GTPase-binding effector protein 2 (RABEP2) from Bos taurus (Bovine).